Consider the following 224-residue polypeptide: uncharacterized protein (224 aa).

The first 17 residues, 1–17 (MFTILLYFLVLFWVTNA), serve as a signal peptide directing secretion.

This is an uncharacterized protein from Caenorhabditis elegans.